Reading from the N-terminus, the 532-residue chain is Mitogen-activated protein kinase kinase mkk1 (532 aa).

In terms of domain architecture, Protein kinase spans 235–505 (IVELGGLGEG…PWKMLEHPWM (271 aa)). Residues 241-249 (LGEGAGGAV) and Lys264 contribute to the ATP site. The Proton acceptor role is filled by Asp362.

This sequence belongs to the protein kinase superfamily. STE Ser/Thr protein kinase family. MAP kinase kinase subfamily.

It catalyses the reaction L-seryl-[protein] + ATP = O-phospho-L-seryl-[protein] + ADP + H(+). The enzyme catalyses L-threonyl-[protein] + ATP = O-phospho-L-threonyl-[protein] + ADP + H(+). Mitogen-activated protein kinase kinase, part of the mkh1-mkk1-spm1 MAPK cascade that regulates regulates vegetative growth, conidial formation, colony surface hydrophobicity, osmotic stress, cell wall integrity maintenance, carbon and nitrogen source utilization, chitin distribution, septa formation, and pathogenicity. The protein is Mitogen-activated protein kinase kinase mkk1 of Cytospora mali (Apple Valsa canker fungus).